The chain runs to 1407 residues: DNA-directed RNA polymerase subunit beta' (1407 aa).

Zn(2+)-binding residues include C70, C72, C85, and C88. Mg(2+) is bound by residues D460, D462, and D464. Residues C814, C888, C895, and C898 each contribute to the Zn(2+) site.

It belongs to the RNA polymerase beta' chain family. As to quaternary structure, the RNAP catalytic core consists of 2 alpha, 1 beta, 1 beta' and 1 omega subunit. When a sigma factor is associated with the core the holoenzyme is formed, which can initiate transcription. Requires Mg(2+) as cofactor. It depends on Zn(2+) as a cofactor.

The enzyme catalyses RNA(n) + a ribonucleoside 5'-triphosphate = RNA(n+1) + diphosphate. Functionally, DNA-dependent RNA polymerase catalyzes the transcription of DNA into RNA using the four ribonucleoside triphosphates as substrates. This is DNA-directed RNA polymerase subunit beta' from Pectobacterium atrosepticum (strain SCRI 1043 / ATCC BAA-672) (Erwinia carotovora subsp. atroseptica).